The primary structure comprises 394 residues: Phosphoglycerate kinase (394 aa).

Residues 21–23 (DFN), arginine 36, 59–62 (HLGR), arginine 118, and arginine 151 each bind substrate. Serine 183 carries the phosphoserine modification. ATP-binding residues include lysine 201 and glycine 292. Threonine 299 carries the phosphothreonine modification. Residues glutamate 323 and 350–353 (GGDS) each bind ATP.

This sequence belongs to the phosphoglycerate kinase family. As to quaternary structure, monomer.

The protein resides in the cytoplasm. It carries out the reaction (2R)-3-phosphoglycerate + ATP = (2R)-3-phospho-glyceroyl phosphate + ADP. It functions in the pathway carbohydrate degradation; glycolysis; pyruvate from D-glyceraldehyde 3-phosphate: step 2/5. This is Phosphoglycerate kinase from Bacillus cereus (strain G9842).